The sequence spans 178 residues: Bifunctional protein PyrR (178 aa).

The PRPP-binding signature appears at 99 to 111 (VVLVDDVIYTGRT).

This sequence belongs to the purine/pyrimidine phosphoribosyltransferase family. PyrR subfamily. As to quaternary structure, homodimer and homohexamer; in equilibrium.

It carries out the reaction UMP + diphosphate = 5-phospho-alpha-D-ribose 1-diphosphate + uracil. Its function is as follows. Regulates transcriptional attenuation of the pyrimidine nucleotide (pyr) operon by binding in a uridine-dependent manner to specific sites on pyr mRNA. This disrupts an antiterminator hairpin in the RNA and favors formation of a downstream transcription terminator, leading to a reduced expression of downstream genes. In terms of biological role, also displays a weak uracil phosphoribosyltransferase activity which is not physiologically significant. The polypeptide is Bifunctional protein PyrR (Thermoanaerobacter pseudethanolicus (strain ATCC 33223 / 39E) (Clostridium thermohydrosulfuricum)).